A 56-amino-acid chain; its full sequence is PI-stichotoxin-Hcr2n (56 aa).

The 51-residue stretch at 4 to 54 (CLEPKKVGRCRGSFPRFYFDSETGKCTPFIYGGCGGNGNNFETLHACRAIC) folds into the BPTI/Kunitz inhibitor domain. Disulfide bonds link Cys4-Cys54, Cys13-Cys37, and Cys29-Cys50.

This sequence belongs to the venom Kunitz-type family. Sea anemone type 2 potassium channel toxin subfamily.

Its subcellular location is the secreted. It is found in the nematocyst. Functionally, this recombinant serine protease inhibitor inhibits trypsin (Ki=30 nM). It possesses anti-inflammatory activity in vitro. It blocks histamine influence on intracellular calcium concentration in murine bone marrow-derived macrophages (62.2% inhibition at 10 uM), which can indicate inhibition of H1-histamine receptor (HRH1). In contrast to some paralogs, this protein decreases reactive oxygen species (ROS) level in the oxidative stress agent 6-hydroxydopamine (6-OHDA)-induced neurotoxicity model, but does not show cytoprotective activity on neuroblastoma cells. In vivo, it shows analgesic activity, since it increases hot plate and tail flick withdrawal latencies, when using a mice thermal pain stimulation model. The polypeptide is PI-stichotoxin-Hcr2n (Radianthus crispa (Leathery sea anemone)).